The primary structure comprises 318 residues: Glycine--tRNA ligase alpha subunit (318 aa).

The protein belongs to the class-II aminoacyl-tRNA synthetase family. Tetramer of two alpha and two beta subunits.

Its subcellular location is the cytoplasm. It catalyses the reaction tRNA(Gly) + glycine + ATP = glycyl-tRNA(Gly) + AMP + diphosphate. The polypeptide is Glycine--tRNA ligase alpha subunit (Methylibium petroleiphilum (strain ATCC BAA-1232 / LMG 22953 / PM1)).